The primary structure comprises 76 residues: Sec-independent protein translocase protein TatA (76 aa).

The chain crosses the membrane as a helical span at residues M1 to G21. Basic and acidic residues-rich tracts occupy residues F39–P50 and G64–S76. The disordered stretch occupies residues F39 to S76.

Belongs to the TatA/E family. The Tat system comprises two distinct complexes: a TatABC complex, containing multiple copies of TatA, TatB and TatC subunits, and a separate TatA complex, containing only TatA subunits. Substrates initially bind to the TatABC complex, which probably triggers association of the separate TatA complex to form the active translocon.

It localises to the cell inner membrane. Functionally, part of the twin-arginine translocation (Tat) system that transports large folded proteins containing a characteristic twin-arginine motif in their signal peptide across membranes. TatA could form the protein-conducting channel of the Tat system. The chain is Sec-independent protein translocase protein TatA from Herminiimonas arsenicoxydans.